Consider the following 1366-residue polypeptide: DNA-directed RNA polymerase subunit beta (1366 aa).

The protein belongs to the RNA polymerase beta chain family. In terms of assembly, the RNAP catalytic core consists of 2 alpha, 1 beta, 1 beta' and 1 omega subunit. When a sigma factor is associated with the core the holoenzyme is formed, which can initiate transcription.

The enzyme catalyses RNA(n) + a ribonucleoside 5'-triphosphate = RNA(n+1) + diphosphate. Its function is as follows. DNA-dependent RNA polymerase catalyzes the transcription of DNA into RNA using the four ribonucleoside triphosphates as substrates. The polypeptide is DNA-directed RNA polymerase subunit beta (Polynucleobacter necessarius subsp. necessarius (strain STIR1)).